The following is a 330-amino-acid chain: Protein FAM170A (330 aa).

Disordered regions lie at residues 1-54 (MKRR…VTST), 76-104 (HRDSPQPQSPLAQVQERGETPPRSQHVSL), and 169-218 (VGTP…AKTP). The span at 174-185 (SDVSTRNLLSDS) shows a compositional bias: polar residues. Residues 189–200 (GEEKEHEERTES) are compositionally biased toward basic and acidic residues. Residue threonine 217 is modified to Phosphothreonine. The C2H2-type; degenerate zinc finger occupies 228–252 (FRCMACCRVFTTMEALQEHVQFGIR). Residues 270-330 (NMESESTQDE…VFHSPKDRNS (61 aa)) form a disordered region. Over residues 275 to 293 (STQDEQEEENGNEKEEEEK) the composition is skewed to acidic residues. Serine 315 is subject to Phosphoserine.

This sequence belongs to the FAM170 family. Expressed strongly in testis and brain and weakly in prostate, spleen, pancreas and uterus.

Its subcellular location is the nucleus. Functionally, acts as a nuclear transcription factor that positively regulates the expression of heat shock genes. Binds to heat shock promoter elements (HSE). The polypeptide is Protein FAM170A (FAM170A) (Homo sapiens (Human)).